The sequence spans 94 residues: Protein RnfH (94 aa).

The protein belongs to the UPF0125 (RnfH) family.

This is Protein RnfH from Sodalis glossinidius (strain morsitans).